The following is a 188-amino-acid chain: dCTP deaminase (188 aa).

DCTP-binding positions include 111–116, 135–137, Gln156, Tyr170, and Gln180; these read KSTYAR and TLE. Residue Glu137 is the Proton donor/acceptor of the active site.

This sequence belongs to the dCTP deaminase family. As to quaternary structure, homotrimer.

It catalyses the reaction dCTP + H2O + H(+) = dUTP + NH4(+). The protein operates within pyrimidine metabolism; dUMP biosynthesis; dUMP from dCTP (dUTP route): step 1/2. Functionally, catalyzes the deamination of dCTP to dUTP. This Nitrosomonas eutropha (strain DSM 101675 / C91 / Nm57) protein is dCTP deaminase.